The chain runs to 374 residues: UDP-N-acetylglucosamine--N-acetylmuramyl-(pentapeptide) pyrophosphoryl-undecaprenol N-acetylglucosamine transferase (374 aa).

UDP-N-acetyl-alpha-D-glucosamine is bound by residues 10-12 (TGG), Asn124, Arg166, Ser196, and Gln294.

The protein belongs to the glycosyltransferase 28 family. MurG subfamily.

Its subcellular location is the cell membrane. It carries out the reaction di-trans,octa-cis-undecaprenyl diphospho-N-acetyl-alpha-D-muramoyl-L-alanyl-D-glutamyl-meso-2,6-diaminopimeloyl-D-alanyl-D-alanine + UDP-N-acetyl-alpha-D-glucosamine = di-trans,octa-cis-undecaprenyl diphospho-[N-acetyl-alpha-D-glucosaminyl-(1-&gt;4)]-N-acetyl-alpha-D-muramoyl-L-alanyl-D-glutamyl-meso-2,6-diaminopimeloyl-D-alanyl-D-alanine + UDP + H(+). It participates in cell wall biogenesis; peptidoglycan biosynthesis. In terms of biological role, cell wall formation. Catalyzes the transfer of a GlcNAc subunit on undecaprenyl-pyrophosphoryl-MurNAc-pentapeptide (lipid intermediate I) to form undecaprenyl-pyrophosphoryl-MurNAc-(pentapeptide)GlcNAc (lipid intermediate II). The polypeptide is UDP-N-acetylglucosamine--N-acetylmuramyl-(pentapeptide) pyrophosphoryl-undecaprenol N-acetylglucosamine transferase (Symbiobacterium thermophilum (strain DSM 24528 / JCM 14929 / IAM 14863 / T)).